An 82-amino-acid chain; its full sequence is Small ribosomal subunit protein uS17 (82 aa).

It belongs to the universal ribosomal protein uS17 family. In terms of assembly, part of the 30S ribosomal subunit.

Functionally, one of the primary rRNA binding proteins, it binds specifically to the 5'-end of 16S ribosomal RNA. The polypeptide is Small ribosomal subunit protein uS17 (Shewanella woodyi (strain ATCC 51908 / MS32)).